A 351-amino-acid polypeptide reads, in one-letter code: UDP-3-O-acylglucosamine N-acyltransferase (351 aa).

Catalysis depends on H257, which acts as the Proton acceptor.

It belongs to the transferase hexapeptide repeat family. LpxD subfamily. In terms of assembly, homotrimer.

It carries out the reaction a UDP-3-O-[(3R)-3-hydroxyacyl]-alpha-D-glucosamine + a (3R)-hydroxyacyl-[ACP] = a UDP-2-N,3-O-bis[(3R)-3-hydroxyacyl]-alpha-D-glucosamine + holo-[ACP] + H(+). The protein operates within bacterial outer membrane biogenesis; LPS lipid A biosynthesis. Catalyzes the N-acylation of UDP-3-O-acylglucosamine using 3-hydroxyacyl-ACP as the acyl donor. Is involved in the biosynthesis of lipid A, a phosphorylated glycolipid that anchors the lipopolysaccharide to the outer membrane of the cell. This is UDP-3-O-acylglucosamine N-acyltransferase from Brucella abortus (strain S19).